Here is a 376-residue protein sequence, read N- to C-terminus: UPF0754 membrane protein Sca_1420 (376 aa).

2 helical membrane-spanning segments follow: residues 4–24 and 356–376; these read FLVI…TNII and LLGF…ALFV.

This sequence belongs to the UPF0754 family.

Its subcellular location is the cell membrane. This chain is UPF0754 membrane protein Sca_1420, found in Staphylococcus carnosus (strain TM300).